A 153-amino-acid polypeptide reads, in one-letter code: Bifunctional protein GAL10 (153 aa).

A galactowaldenase region spans residues 1 to 153; it reads MSDDIFLVTG…IPIPEHCPME (153 aa).

In the N-terminal section; belongs to the NAD(P)-dependent epimerase/dehydratase family. The protein in the C-terminal section; belongs to the aldose epimerase family. It depends on NAD(+) as a cofactor.

The enzyme catalyses UDP-alpha-D-glucose = UDP-alpha-D-galactose. It carries out the reaction alpha-D-glucose = beta-D-glucose. Its pathway is carbohydrate metabolism; galactose metabolism. It functions in the pathway carbohydrate metabolism; hexose metabolism. Functionally, mutarotase converts alpha-aldose to the beta-anomer. It is active on D-glucose, L-arabinose, D-xylose, D-galactose, maltose and lactose. In Candida maltosa (Yeast), this protein is Bifunctional protein GAL10 (GAL10).